The sequence spans 403 residues: Phosphoglycerate kinase (403 aa).

Substrate contacts are provided by residues 22–24, R37, 60–63, R119, and R156; these read DLN and HLGR. Residues K206, G302, E333, and 359–362 contribute to the ATP site; that span reads GGDS.

Belongs to the phosphoglycerate kinase family. Monomer.

It is found in the cytoplasm. It catalyses the reaction (2R)-3-phosphoglycerate + ATP = (2R)-3-phospho-glyceroyl phosphate + ADP. Its pathway is carbohydrate degradation; glycolysis; pyruvate from D-glyceraldehyde 3-phosphate: step 2/5. This is Phosphoglycerate kinase from Leifsonia xyli subsp. xyli (strain CTCB07).